Consider the following 814-residue polypeptide: Glycosyltransferase GlyD (814 aa).

The GT8 domain stretch occupies residues 1–264; that stretch reads MNKTIVLAGD…SQILQHHMGE (264 aa). UDP-binding positions include 8–13 and 102–103; these read AGDRNY and DS. Residues Asp-102, Asp-104, and His-226 each contribute to the Mn(2+) site. 226–232 contributes to the UDP binding site; it reads HFTTYRK. Residues 542 to 814 form a GT-D domain region; that stretch reads EKPLDIIQVK…NSQIVARILN (273 aa).

In the N-terminal section; belongs to the glycosyltransferase 8 family. It in the C-terminal section; belongs to the GT-D family.

Its pathway is protein modification; protein glycosylation. Functionally, involved in the polymorphic O-glycosylation of the serine-rich repeat protein PsrP. Catalyzes the third step in glycosylation PsrP in this bacteria. Transfers glucose from UDP-glucose to the terminal glucose moiety of already-glycosylated PsrP (using truncated substrates with PsrP SSR1-GlcNAc-Glc); the C-terminal GT-D domain is sufficient for this reaction in vitro. Also transfers galactose from UDP-galactose to the terminal glucose moiety of already-glycosylated PsrP; the C-terminal GT-D domain is also sufficient for this reaction in vitro. Activity is much higher with UDP-glucose, and the enzyme has a very marked preference for PsrP substrate that has already been modified by GlcNAc and glucose. In vitro has hydrolytic activity against UDP-galactose and to a lesser extent against UDP-glucose. Its function is as follows. Also catalyzes the fourth step in glycosylation of PsrP in this bacteria. Can transfer the sugar from both UDP-glucose and UDP-galactose to the terminal sugar moiety of PsrP-GlcNAc-Glc-Glc and PsrP-GlcNAc-Glc-Gal; the C-terminal GT-D domain is also sufficient for this reaction in vitro (using truncated substrates with glycosylated PsrP SSR1). The N-terminal GT-D domain can transfer galactose from UDP-galactose to PsrP-GlcNAc-Glc-Gal or PsrP-GlcNAc-Glc-Glc in the fourth step. In Streptococcus pneumoniae serotype 4 (strain ATCC BAA-334 / TIGR4), this protein is Glycosyltransferase GlyD.